Reading from the N-terminus, the 342-residue chain is 4-hydroxy-2-oxovalerate aldolase (342 aa).

Residues 7 to 257 enclose the Pyruvate carboxyltransferase domain; that stretch reads VWITEVALRD…KTGIDLYKMM (251 aa). 15 to 16 contacts substrate; the sequence is RD. Residue aspartate 16 coordinates Mn(2+). The active-site Proton acceptor is histidine 19. Substrate contacts are provided by serine 169 and histidine 196. Residues histidine 196 and histidine 198 each coordinate Mn(2+). Residue tyrosine 287 participates in substrate binding.

This sequence belongs to the 4-hydroxy-2-oxovalerate aldolase family.

It catalyses the reaction (S)-4-hydroxy-2-oxopentanoate = acetaldehyde + pyruvate. In Geobacillus stearothermophilus (Bacillus stearothermophilus), this protein is 4-hydroxy-2-oxovalerate aldolase (pheE).